The primary structure comprises 92 residues: Small ribosomal subunit protein uS17 (92 aa).

Belongs to the universal ribosomal protein uS17 family. In terms of assembly, part of the 30S ribosomal subunit.

In terms of biological role, one of the primary rRNA binding proteins, it binds specifically to the 5'-end of 16S ribosomal RNA. The chain is Small ribosomal subunit protein uS17 from Bordetella petrii (strain ATCC BAA-461 / DSM 12804 / CCUG 43448).